The sequence spans 85 residues: ATP synthase subunit c (85 aa).

The next 2 helical transmembrane spans lie at 10–30 (IAVG…FALL) and 53–73 (FIIA…ALLF).

Belongs to the ATPase C chain family. As to quaternary structure, F-type ATPases have 2 components, F(1) - the catalytic core - and F(0) - the membrane proton channel. F(1) has five subunits: alpha(3), beta(3), gamma(1), delta(1), epsilon(1). F(0) has three main subunits: a(1), b(2) and c(10-14). The alpha and beta chains form an alternating ring which encloses part of the gamma chain. F(1) is attached to F(0) by a central stalk formed by the gamma and epsilon chains, while a peripheral stalk is formed by the delta and b chains.

Its subcellular location is the cell inner membrane. Its function is as follows. F(1)F(0) ATP synthase produces ATP from ADP in the presence of a proton or sodium gradient. F-type ATPases consist of two structural domains, F(1) containing the extramembraneous catalytic core and F(0) containing the membrane proton channel, linked together by a central stalk and a peripheral stalk. During catalysis, ATP synthesis in the catalytic domain of F(1) is coupled via a rotary mechanism of the central stalk subunits to proton translocation. In terms of biological role, key component of the F(0) channel; it plays a direct role in translocation across the membrane. A homomeric c-ring of between 10-14 subunits forms the central stalk rotor element with the F(1) delta and epsilon subunits. The polypeptide is ATP synthase subunit c (Aliivibrio fischeri (strain ATCC 700601 / ES114) (Vibrio fischeri)).